The chain runs to 202 residues: UPF0316 protein SH1041 (202 aa).

3 consecutive transmembrane segments (helical) span residues proline 8–methionine 28, methionine 40–methionine 60, and isoleucine 66–isoleucine 86.

This sequence belongs to the UPF0316 family.

The protein localises to the cell membrane. The protein is UPF0316 protein SH1041 of Staphylococcus haemolyticus (strain JCSC1435).